A 352-amino-acid polypeptide reads, in one-letter code: Chorismate synthase (352 aa).

Residues Arg-48 and Arg-54 each contribute to the NADP(+) site. FMN is bound by residues 125–127, 238–239, Ala-278, 293–297, and Arg-319; these read RAS, NA, and KPASS.

The protein belongs to the chorismate synthase family. As to quaternary structure, homotetramer. The cofactor is FMNH2.

It carries out the reaction 5-O-(1-carboxyvinyl)-3-phosphoshikimate = chorismate + phosphate. It functions in the pathway metabolic intermediate biosynthesis; chorismate biosynthesis; chorismate from D-erythrose 4-phosphate and phosphoenolpyruvate: step 7/7. Functionally, catalyzes the anti-1,4-elimination of the C-3 phosphate and the C-6 proR hydrogen from 5-enolpyruvylshikimate-3-phosphate (EPSP) to yield chorismate, which is the branch point compound that serves as the starting substrate for the three terminal pathways of aromatic amino acid biosynthesis. This reaction introduces a second double bond into the aromatic ring system. In Coxiella burnetii (strain RSA 493 / Nine Mile phase I), this protein is Chorismate synthase.